The primary structure comprises 81 residues: Small ribosomal subunit protein bS16 (81 aa).

It belongs to the bacterial ribosomal protein bS16 family.

The polypeptide is Small ribosomal subunit protein bS16 (Neisseria meningitidis serogroup C (strain 053442)).